The primary structure comprises 199 residues: N-(5'-phosphoribosyl)anthranilate isomerase (199 aa).

Belongs to the TrpF family.

It carries out the reaction N-(5-phospho-beta-D-ribosyl)anthranilate = 1-(2-carboxyphenylamino)-1-deoxy-D-ribulose 5-phosphate. It functions in the pathway amino-acid biosynthesis; L-tryptophan biosynthesis; L-tryptophan from chorismate: step 3/5. This chain is N-(5'-phosphoribosyl)anthranilate isomerase, found in Lacticaseibacillus casei (strain BL23) (Lactobacillus casei).